A 424-amino-acid polypeptide reads, in one-letter code: Serine--tRNA ligase (424 aa).

233 to 235 (TAE) serves as a coordination point for L-serine. ATP-binding positions include 264–266 (RRE) and Val-280. Glu-287 serves as a coordination point for L-serine. ATP is bound at residue 351–354 (EISS). L-serine is bound at residue Ser-386.

It belongs to the class-II aminoacyl-tRNA synthetase family. Type-1 seryl-tRNA synthetase subfamily. In terms of assembly, homodimer. The tRNA molecule binds across the dimer.

The protein resides in the cytoplasm. It carries out the reaction tRNA(Ser) + L-serine + ATP = L-seryl-tRNA(Ser) + AMP + diphosphate + H(+). The enzyme catalyses tRNA(Sec) + L-serine + ATP = L-seryl-tRNA(Sec) + AMP + diphosphate + H(+). It functions in the pathway aminoacyl-tRNA biosynthesis; selenocysteinyl-tRNA(Sec) biosynthesis; L-seryl-tRNA(Sec) from L-serine and tRNA(Sec): step 1/1. In terms of biological role, catalyzes the attachment of serine to tRNA(Ser). Is also able to aminoacylate tRNA(Sec) with serine, to form the misacylated tRNA L-seryl-tRNA(Sec), which will be further converted into selenocysteinyl-tRNA(Sec). The polypeptide is Serine--tRNA ligase (Kosmotoga olearia (strain ATCC BAA-1733 / DSM 21960 / TBF 19.5.1)).